A 426-amino-acid chain; its full sequence is DNA primase DnaG (426 aa).

The Toprim domain occupies 165–241 (DEIIIVEGRA…DIDYVAKAPP (77 aa)). 3 residues coordinate Mg(2+): E171, D215, and D217. Residues 278 to 298 (PAVEERPQPPQPQPPAVQPVQ) are disordered. Over residues 285–294 (QPPQPQPPAV) the composition is skewed to pro residues.

This sequence belongs to the archaeal DnaG primase family. In terms of assembly, forms a ternary complex with MCM helicase and DNA. Component of the archaeal exosome complex. It depends on Mg(2+) as a cofactor.

The catalysed reaction is ssDNA + n NTP = ssDNA/pppN(pN)n-1 hybrid + (n-1) diphosphate.. Functionally, RNA polymerase that catalyzes the synthesis of short RNA molecules used as primers for DNA polymerase during DNA replication. Also part of the exosome, which is a complex involved in RNA degradation. Acts as a poly(A)-binding protein that enhances the interaction between heteromeric, adenine-rich transcripts and the exosome. The polypeptide is DNA primase DnaG (Hyperthermus butylicus (strain DSM 5456 / JCM 9403 / PLM1-5)).